A 182-amino-acid polypeptide reads, in one-letter code: MWKLSRSRVLLDEPPEEEDVLRGAPPASAAAPASGASLRGWKEATSLFNKDDEEHLLETSRSPKSKGTNQRLREELKAEKKSGFWDALVLKQNAQPKKPDQIEGWEPPKLTAEDVVADHTEDDRSGCPPWSAWEDDTKGSTKYTSLANSASSSRWSLRSAGKLVSIRRQSKGHLTETCEEGE.

3 disordered regions span residues 1 to 38 (MWKL…GASL), 52 to 73 (DEEH…QRLR), and 95 to 151 (QPKK…NSAS). Ser7 is subject to Phosphoserine. Over residues 22–37 (RGAPPASAAAPASGAS) the composition is skewed to low complexity. Polar residues predominate over residues 59-70 (TSRSPKSKGTNQ). Basic and acidic residues predominate over residues 116–125 (VADHTEDDRS).

This sequence belongs to the TDRP family. Interacts with PRM2. Strongly expressed in testis. Also detected at lower levels in epididymis, bone marrow and kidney.

Its subcellular location is the nucleus. It localises to the cytoplasm. In terms of biological role, contributes to normal sperm motility, but not essential for male fertility. The sequence is that of Testis development-related protein (Tdrp) from Mus musculus (Mouse).